Here is a 406-residue protein sequence, read N- to C-terminus: Large ribosomal subunit protein uL4z (406 aa).

A disordered region spans residues 56-95 (PYAVSKKAGHQTSAESWGTGRAVSRIPRVPGGGTHRAGQA).

It belongs to the universal ribosomal protein uL4 family.

The chain is Large ribosomal subunit protein uL4z (RPL4A) from Arabidopsis thaliana (Mouse-ear cress).